The sequence spans 358 residues: uncharacterized protein (358 aa).

Low complexity predominate over residues 70–88; that stretch reads RPAATAGTTPATGASGSAR. Residues 70-93 are disordered; sequence RPAATAGTTPATGASGSARPTDAA. Residues 178–353 form the Macro domain; that stretch reads PSTCRGDNVS…AFSAAIQAGE (176 aa).

This is an uncharacterized protein from Mycobacterium bovis (strain ATCC BAA-935 / AF2122/97).